Reading from the N-terminus, the 229-residue chain is Enolase-phosphatase E1 (229 aa).

The protein belongs to the HAD-like hydrolase superfamily. MasA/MtnC family. Monomer. Requires Mg(2+) as cofactor.

It carries out the reaction 5-methylsulfanyl-2,3-dioxopentyl phosphate + H2O = 1,2-dihydroxy-5-(methylsulfanyl)pent-1-en-3-one + phosphate. The protein operates within amino-acid biosynthesis; L-methionine biosynthesis via salvage pathway; L-methionine from S-methyl-5-thio-alpha-D-ribose 1-phosphate: step 3/6. Its pathway is amino-acid biosynthesis; L-methionine biosynthesis via salvage pathway; L-methionine from S-methyl-5-thio-alpha-D-ribose 1-phosphate: step 4/6. In terms of biological role, bifunctional enzyme that catalyzes the enolization of 2,3-diketo-5-methylthiopentyl-1-phosphate (DK-MTP-1-P) into the intermediate 2-hydroxy-3-keto-5-methylthiopentenyl-1-phosphate (HK-MTPenyl-1-P), which is then dephosphorylated to form the acireductone 1,2-dihydroxy-3-keto-5-methylthiopentene (DHK-MTPene). The polypeptide is Enolase-phosphatase E1 (Yersinia pseudotuberculosis serotype IB (strain PB1/+)).